The primary structure comprises 608 residues: Lysophospholipase 2 (608 aa).

The signal sequence occupies residues 1-17; that stretch reads MLVWQSILLFLVGCVLS. A PLA2c domain is found at 30–564; sequence QCPEGKLTRS…ENYCWDGTIY (535 aa). Residues Asn-259, Asn-365, Asn-450, Asn-464, Asn-491, and Asn-572 are each glycosylated (N-linked (GlcNAc...) asparagine).

Belongs to the lysophospholipase family.

The protein resides in the secreted. It catalyses the reaction a 1-acyl-sn-glycero-3-phosphocholine + H2O = sn-glycerol 3-phosphocholine + a fatty acid + H(+). Its function is as follows. Catalyzes the release of fatty acids from lysophospholipids. Phospholipase B may well contribute to pathogenicity by abetting the fungus in damaging and traversing host cell membranes, processes which likely increase the rapidity of disseminated infection. This chain is Lysophospholipase 2 (PLB2), found in Candida albicans (Yeast).